The primary structure comprises 68 residues: Beta-defensin 1 (68 aa).

A signal peptide spans 1 to 21 (MRTSYLLLFILCLVLCDMDSG). A propeptide spanning residues 22-32 (DTFLTGLGHRS) is cleaved from the precursor. 3 disulfide bridges follow: cysteine 37–cysteine 66, cysteine 44–cysteine 59, and cysteine 49–cysteine 67.

It belongs to the beta-defensin family. Monomer. Homodimer.

It is found in the secreted. It localises to the membrane. Functionally, has bactericidal activity. May act as a ligand for C-C chemokine receptor CCR6. Positively regulates the sperm motility and bactericidal activity in a CCR6-dependent manner. Binds to CCR6 and triggers Ca2+ mobilization in the sperm which is important for its motility. The sequence is that of Beta-defensin 1 (DEFB1) from Saguinus oedipus (Cotton-top tamarin).